The primary structure comprises 516 residues: L-amino-acid oxidase (516 aa).

The first 18 residues, 1 to 18 (MNVFFMFSLLFLAALGSC), serve as a signal peptide directing secretion. Residues cysteine 28 and cysteine 189 are joined by a disulfide bond. FAD is bound by residues 61 to 62 (MA), 81 to 82 (EA), arginine 89, and 103 to 106 (GPMR). Arginine 106 and histidine 239 together coordinate substrate. Valine 279 provides a ligand contact to FAD. The cysteines at positions 349 and 430 are disulfide-linked. The N-linked (GlcNAc...) asparagine glycan is linked to asparagine 379. A substrate-binding site is contributed by tyrosine 390. FAD is bound by residues glutamate 475 and 482–487 (GWIDST). 482–483 (GW) provides a ligand contact to substrate.

Belongs to the flavin monoamine oxidase family. FIG1 subfamily. In terms of assembly, homodimer; non-covalently linked. FAD serves as cofactor. Post-translationally, N-glycosylated. In terms of tissue distribution, expressed by the venom gland.

The protein localises to the secreted. The catalysed reaction is an L-alpha-amino acid + O2 + H2O = a 2-oxocarboxylate + H2O2 + NH4(+). The enzyme catalyses L-leucine + O2 + H2O = 4-methyl-2-oxopentanoate + H2O2 + NH4(+). It carries out the reaction L-phenylalanine + O2 + H2O = 3-phenylpyruvate + H2O2 + NH4(+). It catalyses the reaction L-methionine + O2 + H2O = 4-methylsulfanyl-2-oxobutanoate + H2O2 + NH4(+). The catalysed reaction is L-arginine + O2 + H2O = 5-guanidino-2-oxopentanoate + H2O2 + NH4(+). In terms of biological role, catalyzes an oxidative deamination of predominantly hydrophobic and aromatic L-amino acids, thus producing hydrogen peroxide that may contribute to the diverse toxic effects of this enzyme. Is active on L-Arg, L-Phe, L-Met, and L-Leu and is weakly active on L-Val. Exhibits diverse biological activities, such as hemorrhage, hemolysis, edema, apoptosis of vascular endothelial cells or tumor cell lines, antibacterial and antiparasitic activities, as well as regulation of platelet aggregation. Its effect on platelets is controversial, since it either induces aggregation or inhibits agonist-induced aggregation. These different effects are probably due to different experimental conditions. This is L-amino-acid oxidase from Crotalus adamanteus (Eastern diamondback rattlesnake).